A 734-amino-acid chain; its full sequence is Ribosomal RNA large subunit methyltransferase K/L (734 aa).

One can recognise a THUMP domain in the interval 43 to 154; the sequence is VGYRSCLWSR…RNQLTLSLDL (112 aa).

This sequence belongs to the methyltransferase superfamily. RlmKL family.

The protein resides in the cytoplasm. The enzyme catalyses guanosine(2445) in 23S rRNA + S-adenosyl-L-methionine = N(2)-methylguanosine(2445) in 23S rRNA + S-adenosyl-L-homocysteine + H(+). The catalysed reaction is guanosine(2069) in 23S rRNA + S-adenosyl-L-methionine = N(2)-methylguanosine(2069) in 23S rRNA + S-adenosyl-L-homocysteine + H(+). Its function is as follows. Specifically methylates the guanine in position 2445 (m2G2445) and the guanine in position 2069 (m7G2069) of 23S rRNA. The protein is Ribosomal RNA large subunit methyltransferase K/L of Hydrogenovibrio crunogenus (strain DSM 25203 / XCL-2) (Thiomicrospira crunogena).